The sequence spans 161 residues: Large ribosomal subunit protein uL11 (161 aa).

The protein belongs to the universal ribosomal protein uL11 family. As to quaternary structure, part of the ribosomal stalk of the 50S ribosomal subunit. Interacts with L10 and the large rRNA to form the base of the stalk. L10 forms an elongated spine to which L12 dimers bind in a sequential fashion forming a multimeric L10(L12)X complex.

Its function is as follows. Forms part of the ribosomal stalk which helps the ribosome interact with GTP-bound translation factors. The polypeptide is Large ribosomal subunit protein uL11 (Methanocaldococcus jannaschii (strain ATCC 43067 / DSM 2661 / JAL-1 / JCM 10045 / NBRC 100440) (Methanococcus jannaschii)).